Here is a 330-residue protein sequence, read N- to C-terminus: Mycothiol acetyltransferase (330 aa).

N-acetyltransferase domains follow at residues 5–142 and 171–328; these read LVTD…MPLR and VRLR…APRP. E36 serves as a coordination point for 1D-myo-inositol 2-(L-cysteinylamino)-2-deoxy-alpha-D-glucopyranoside. Acetyl-CoA is bound at residue 80–82; it reads VVV. The tract at residues 142 to 161 is disordered; sequence RDIAGDEPGGPWEAPELPEP. Residues E198, K238, and E254 each contribute to the 1D-myo-inositol 2-(L-cysteinylamino)-2-deoxy-alpha-D-glucopyranoside site. Acetyl-CoA contacts are provided by residues 258 to 260 and 265 to 271; these read VGV and QGSGLGR. Y292 is a 1D-myo-inositol 2-(L-cysteinylamino)-2-deoxy-alpha-D-glucopyranoside binding site. 297–302 provides a ligand contact to acetyl-CoA; the sequence is NEAAVR.

It belongs to the acetyltransferase family. MshD subfamily. As to quaternary structure, monomer.

It catalyses the reaction 1D-myo-inositol 2-(L-cysteinylamino)-2-deoxy-alpha-D-glucopyranoside + acetyl-CoA = mycothiol + CoA + H(+). Functionally, catalyzes the transfer of acetyl from acetyl-CoA to desacetylmycothiol (Cys-GlcN-Ins) to form mycothiol. This is Mycothiol acetyltransferase from Nocardiopsis dassonvillei (strain ATCC 23218 / DSM 43111 / CIP 107115 / JCM 7437 / KCTC 9190 / NBRC 14626 / NCTC 10488 / NRRL B-5397 / IMRU 509) (Actinomadura dassonvillei).